The chain runs to 3515 residues: Microtubule-actin cross-linking factor 1, isoforms 6/7 (3515 aa).

Disordered stretches follow at residues 1–23, 108–136, 155–196, 965–1178, 1217–1298, 1710–1730, and 3078–3108; these read MGKPLSRPDCLRRNPSCLGKGEE, VQKSAPVPPRRRPNAERKDNVNRRSWKSF, VSEA…TLEH, TEED…AVPT, SPAA…SPAA, EELATSGGQSPTGEQIPQFQQ, and PTHAPFIEKSRSGGRKSLSQPTPPPMPILSQ. The segment covering 120-129 has biased composition (basic and acidic residues); the sequence is PNAERKDNVN. The segment at 157-245 is 13 X 13 AA approximate tandem repeat of P-T-S-P-A-A-A-V-P-T-P-E-E; it reads EAGASNPSLQ…ESEAVATSGN (89 aa). Composition is skewed to low complexity over residues 995–1031 and 1040–1139; these read STPEEPASPAAAVPTPEEPTSPAAAVPTPEEPTSPAA and TSPA…AVPT. A run of 13 repeats spans residues 1012–1024, 1026–1037, 1038–1051, 1052–1064, 1065–1077, 1078–1090, 1091–1103, 1104–1116, 1117–1129, 1130–1142, 1143–1155, 1156–1168, and 1169–1178. Over residues 1140-1151 the composition is skewed to pro residues; that stretch reads PEEPAFPAPAVP. Composition is skewed to low complexity over residues 1162-1178 and 1268-1298; these read AVPTPEESASPAAAVPT and SSPAASVPTPEEPASPAAAVSNLEEPASPAA. Positions 1715-1730 are enriched in polar residues; the sequence is SGGQSPTGEQIPQFQQ. EF-hand domains follow at residues 3168-3203 and 3204-3239; these read HKKSRVMDFFRRIDKDQDGKITRQEFIDGILASKFP and TTKLEMTAVADIFDRDGDGYIDYYEFVAALHPNKDA. Positions 3181, 3183, 3185, 3187, 3192, 3217, 3219, 3221, 3223, and 3228 each coordinate Ca(2+). The GAR domain occupies 3244–3316; sequence TDADKIEDEV…EFLVKNDPCR (73 aa). The disordered stretch occupies residues 3332 to 3515; sequence PEGASQGMTP…ASPRTPGPKR (184 aa). The segment covering 3352 to 3386 has biased composition (low complexity); it reads SSRAASPTRSSSSASQSNHSCTSMPSSPATPASGT. Residues 3402 to 3426 show a composition bias toward polar residues; the sequence is TFHSSRTSLAGDTSNSSSPASTGAK. Low complexity predominate over residues 3437-3451; it reads SRPGSRAGSRAGSRA. The segment covering 3466-3488 has biased composition (polar residues); that stretch reads ETQSACSDTSESSAAGGQGNSRR.

It localises to the cytoplasm. It is found in the cytoskeleton. The protein is Microtubule-actin cross-linking factor 1, isoforms 6/7 of Homo sapiens (Human).